We begin with the raw amino-acid sequence, 172 residues long: Epithelial membrane protein 2 (172 aa).

4 helical membrane passes run 1-21, 72-92, 100-120, and 148-168; these read MLVI…LLFI, TMIL…LQLF, FVLT…GASV, and FILA…YMIL.

It belongs to the PMP-22/EMP/MP20 family. In terms of assembly, interacts with PTK2; regulates PTK2 activation and localization. Interacts with ITGB3; regulates the levels of the heterodimer ITGA5-ITGB3 integrin surface expression. Interacts with P2RX7 (via C-terminus). Interacts with ITGB1; the interaction may be direct or indirect and ITGB1 has a heterodimer form. As to expression, expressed in glomeruli.

Its subcellular location is the golgi apparatus membrane. The protein resides in the cell membrane. It localises to the apical cell membrane. It is found in the membrane raft. The protein localises to the cytoplasm. Its subcellular location is the nucleus. The protein resides in the perinuclear region. Functions as a key regulator of cell membrane composition by regulating protein surface expression. Also, plays a role in regulation of processes including cell migration, cell proliferation, cell contraction and cell adhesion. Regulates transepithelial migration of neutrophils into the alveolar lumen, potentially via mediation of cell surface expression of adhesion markers and lipid raft formation. Negatively regulates caveolae formation by reducing CAV1 expression and CAV1 amount by increasing lysosomal degradation. Facilitates surface trafficking and the formation of lipid rafts bearing GPI-anchor proteins. Regulates surface expression of MHC1 and ICAM1 proteins increasing susceptibility to T-cell mediated cytotoxicity. Regulates the plasma membrane expression of the integrin heterodimers ITGA6-ITGB1, ITGA5-ITGB3 and ITGA5-ITGB1 resulting in modulation of cell-matrix adhesion. Also regulates many processes through PTK2. Regulates blood vessel endothelial cell migration and angiogenesis by regulating VEGF protein expression through PTK2 activation. Regulates cell migration and cell contraction through PTK2 and SRC activation. Regulates focal adhesion density, F-actin conformation and cell adhesion capacity through interaction with PTK2. Positively regulates cell proliferation. Plays a role during cell death and cell blebbing. Promotes angiogenesis and vasculogenesis through induction of VEGFA via a HIF1A-dependent pathway. Also plays a role in embryo implantation by regulating surface trafficking of integrin heterodimer ITGA5-ITGB3. Plays a role in placental angiogenesis and uterine natural killer cell regulation at the maternal-fetal placental interface, however not required in the maternal tissues for a viable pregnancy. Involved in the early stages of embryogenic development and cardiogenesis, potentially via regulation of epithelial-mesenchymal transition timing. May play a role in glomerular filtration. This is Epithelial membrane protein 2 (Emp2) from Rattus norvegicus (Rat).